The following is a 443-amino-acid chain: Structure-specific endonuclease subunit SLX1 homolog (443 aa).

The interval 1–27 (METFILSSDSDDDSGPPPSKRRTIEGI) is disordered. Residues 171–258 (EFYGVYCLIS…PLVSKSLKEK (88 aa)) form the GIY-YIG domain. The SLX1-type zinc-finger motif lies at 340-395 (CRICGKDIEKLWSLVRCISATCPSHFHSKCLSENGLKLKNEHVDHVYPLKANCPTC).

It belongs to the SLX1 family. Forms a heterodimer with him-18/slx-4. Requires a divalent metal cation as cofactor.

It is found in the nucleus. Functionally, catalytic subunit of a heterodimeric structure-specific endonuclease that resolves DNA secondary structures generated during DNA repair and recombination. Has endonuclease activity towards branched DNA substrates, introducing single-strand cuts in duplex DNA close to junctions with ss-DNA (Potential). Has a preference for replication forks over 5' flap structures or Holliday junctions and shows much lower activity toward 3' flap structures. Required for proper crossover distribution through inhibition of crossover formation at the central region of chromosomes. This chain is Structure-specific endonuclease subunit SLX1 homolog, found in Caenorhabditis elegans.